The following is a 464-amino-acid chain: ATP synthase subunit beta (464 aa).

Residue 148-155 (GGAGVGKT) coordinates ATP.

This sequence belongs to the ATPase alpha/beta chains family. In terms of assembly, F-type ATPases have 2 components, CF(1) - the catalytic core - and CF(0) - the membrane proton channel. CF(1) has five subunits: alpha(3), beta(3), gamma(1), delta(1), epsilon(1). CF(0) has three main subunits: a(1), b(2) and c(9-12). The alpha and beta chains form an alternating ring which encloses part of the gamma chain. CF(1) is attached to CF(0) by a central stalk formed by the gamma and epsilon chains, while a peripheral stalk is formed by the delta and b chains.

The protein localises to the cell inner membrane. The enzyme catalyses ATP + H2O + 4 H(+)(in) = ADP + phosphate + 5 H(+)(out). Functionally, produces ATP from ADP in the presence of a proton gradient across the membrane. The catalytic sites are hosted primarily by the beta subunits. The sequence is that of ATP synthase subunit beta from Acinetobacter baylyi (strain ATCC 33305 / BD413 / ADP1).